We begin with the raw amino-acid sequence, 74 residues long: UPF0346 protein LCA_0996 (74 aa).

This sequence belongs to the UPF0346 family.

The chain is UPF0346 protein LCA_0996 from Latilactobacillus sakei subsp. sakei (strain 23K) (Lactobacillus sakei subsp. sakei).